The sequence spans 199 residues: Holliday junction branch migration complex subunit RuvA (199 aa).

The interval 1 to 63 (MYEYLTGLVT…EDNISLFGFT (63 aa)) is domain I. The domain II stretch occupies residues 64–142 (DQNEKNLFMQ…NESSSSLFAT (79 aa)). A flexible linker region spans residues 143–149 (TQLTVDA). The tract at residues 150–199 (TVNRELKDALEALAALGYKERDIKKVQKALMKEEQMATDEYLRQALRLLN) is domain III.

Belongs to the RuvA family. In terms of assembly, homotetramer. Forms an RuvA(8)-RuvB(12)-Holliday junction (HJ) complex. HJ DNA is sandwiched between 2 RuvA tetramers; dsDNA enters through RuvA and exits via RuvB. An RuvB hexamer assembles on each DNA strand where it exits the tetramer. Each RuvB hexamer is contacted by two RuvA subunits (via domain III) on 2 adjacent RuvB subunits; this complex drives branch migration. In the full resolvosome a probable DNA-RuvA(4)-RuvB(12)-RuvC(2) complex forms which resolves the HJ.

It localises to the cytoplasm. Its function is as follows. The RuvA-RuvB-RuvC complex processes Holliday junction (HJ) DNA during genetic recombination and DNA repair, while the RuvA-RuvB complex plays an important role in the rescue of blocked DNA replication forks via replication fork reversal (RFR). RuvA specifically binds to HJ cruciform DNA, conferring on it an open structure. The RuvB hexamer acts as an ATP-dependent pump, pulling dsDNA into and through the RuvAB complex. HJ branch migration allows RuvC to scan DNA until it finds its consensus sequence, where it cleaves and resolves the cruciform DNA. The polypeptide is Holliday junction branch migration complex subunit RuvA (Limosilactobacillus reuteri subsp. reuteri (strain JCM 1112) (Lactobacillus reuteri)).